A 160-amino-acid chain; its full sequence is Aspartate carbamoyltransferase regulatory chain (160 aa).

Residues C110, C115, C140, and C143 each contribute to the Zn(2+) site.

Belongs to the PyrI family. Contains catalytic and regulatory chains. Zn(2+) is required as a cofactor.

Its function is as follows. Involved in allosteric regulation of aspartate carbamoyltransferase. This is Aspartate carbamoyltransferase regulatory chain from Hyperthermus butylicus (strain DSM 5456 / JCM 9403 / PLM1-5).